The sequence spans 371 residues: Peptide chain release factor 2 (371 aa).

Gln247 is modified (N5-methylglutamine).

This sequence belongs to the prokaryotic/mitochondrial release factor family. Methylated by PrmC. Methylation increases the termination efficiency of RF2.

Its subcellular location is the cytoplasm. Peptide chain release factor 2 directs the termination of translation in response to the peptide chain termination codons UGA and UAA. The sequence is that of Peptide chain release factor 2 from Caulobacter vibrioides (strain ATCC 19089 / CIP 103742 / CB 15) (Caulobacter crescentus).